Reading from the N-terminus, the 213-residue chain is Transcriptional regulatory protein CrdR (213 aa).

Residues 4 to 119 (KIFLLEDDYL…ELEARIKRFF (116 aa)) form the Response regulatory domain. Residue Asp-53 is modified to 4-aspartylphosphate. A DNA-binding region (ompR/PhoB-type) is located at residues 121–212 (DDPIEIMPNI…HKGVGYRFNP (92 aa)).

Post-translationally, phosphorylated by CrdS.

Its function is as follows. Member of the two-component regulatory system CrdR/CrdS that induces the transcriptional induction of the copper resistance determinant CrdA. Upon phosphorylation by CrdS, functions as a transcriptional regulator by direct binding to promoter regions of target genes including the crdA promoter or nitric oxide-responsive gene promoters. In Helicobacter pylori (strain ATCC 700392 / 26695) (Campylobacter pylori), this protein is Transcriptional regulatory protein CrdR.